The following is a 156-amino-acid chain: uncharacterized protein (156 aa).

This is an uncharacterized protein from Haemophilus influenzae (strain ATCC 51907 / DSM 11121 / KW20 / Rd).